Consider the following 505-residue polypeptide: uncharacterized protein (505 aa).

Residues 1 to 16 (MPPTASLTRSPPTASQ) are compositionally biased toward polar residues. Residues 1-474 (MPPTASLTRS…TPPTASLTRT (474 aa)) form a disordered region. 2 stretches are compositionally biased toward low complexity: residues 17–33 (TRTL…PRAS) and 40–59 (TASL…PPRA). Residues 66-78 (SRASLTRTLSRAS) show a composition bias toward polar residues. Composition is skewed to low complexity over residues 96–122 (SLTR…PPRT), 129–140 (PRTSQTRTPPRA), and 147–158 (SRASRTRTPPRA). Polar residues-rich tracts occupy residues 165-177 (SRAS…SRAS) and 188-200 (TRTP…TRTP). Low complexity predominate over residues 201–226 (PTASLTRASRTRTPPRTSQTRTPPRA). Composition is skewed to polar residues over residues 233-254 (SRAS…SRAS), 265-293 (TRTP…SLTR), 309-329 (LTRT…SLTR), 345-365 (LTRT…SLTR), 373-383 (TRTPSRASLTR), 399-408 (LTRSPPTASL), and 435-448 (LTRS…TRTP). A compositionally biased stretch (low complexity) spans 453–474 (LRRTPPRTSLTRTPPTASLTRT).

This is an uncharacterized protein from Homo sapiens (Human).